The primary structure comprises 104 residues: Small ribosomal subunit protein uS10 (104 aa).

Belongs to the universal ribosomal protein uS10 family. Part of the 30S ribosomal subunit.

Involved in the binding of tRNA to the ribosomes. This is Small ribosomal subunit protein uS10 from Aquifex aeolicus (strain VF5).